Here is a 56-residue protein sequence, read N- to C-terminus: Large ribosomal subunit protein bL33 (56 aa).

The protein belongs to the bacterial ribosomal protein bL33 family.

This Acidovorax sp. (strain JS42) protein is Large ribosomal subunit protein bL33.